Consider the following 1453-residue polypeptide: NK-tumor recognition protein (1453 aa).

One can recognise a PPIase cyclophilin-type domain in the interval histidine 10–valine 175. A disordered region spans residues lysine 187 to lysine 625. Positions serine 195–glutamate 213 are enriched in low complexity. Residues isoleucine 221 to lysine 240 show a composition bias toward basic residues. Over residues tyrosine 259 to glutamate 286 the composition is skewed to basic and acidic residues. A Glycyl lysine isopeptide (Lys-Gly) (interchain with G-Cter in SUMO2) cross-link involves residue lysine 323. Residues serine 329–arginine 348 show a composition bias toward basic residues. A phosphoserine mark is found at serine 379, serine 401, and serine 416. Over residues lysine 382–leucine 402 the composition is skewed to basic and acidic residues. Residues serine 403 to alanine 421 are compositionally biased toward polar residues. Residues aspartate 425–isoleucine 460 are compositionally biased toward basic residues. A compositionally biased stretch (basic and acidic residues) spans serine 514–glycine 531. 2 stretches are compositionally biased toward low complexity: residues serine 532 to leucine 546 and serine 554 to serine 565. Glycyl lysine isopeptide (Lys-Gly) (interchain with G-Cter in SUMO2) cross-links involve residues lysine 576 and lysine 579. The residue at position 611 (serine 611) is a Phosphoserine. Lysine 637 is covalently cross-linked (Glycyl lysine isopeptide (Lys-Gly) (interchain with G-Cter in SUMO2)). A Phosphoserine modification is found at serine 646. Residues threonine 651–serine 661 show a composition bias toward polar residues. A disordered region spans residues threonine 651–serine 1453. Residues lysine 654 and lysine 664 each participate in a glycyl lysine isopeptide (Lys-Gly) (interchain with G-Cter in SUMO2) cross-link. 2 stretches are compositionally biased toward low complexity: residues arginine 682–serine 726 and serine 736–serine 749. Over residues alanine 755–arginine 772 the composition is skewed to basic residues. Positions serine 773–lysine 789 are enriched in basic and acidic residues. Residues serine 799 to serine 809 show a composition bias toward low complexity. Composition is skewed to basic and acidic residues over residues proline 820 to arginine 852 and lysine 859 to serine 868. 4 positions are modified to phosphoserine: serine 880, serine 882, serine 884, and serine 900. The segment covering aspartate 887–lysine 902 has biased composition (basic and acidic residues). Residues glutamate 903–serine 913 show a composition bias toward acidic residues. Residues serine 948–serine 958 are compositionally biased toward low complexity. The span at glutamate 966–threonine 982 shows a compositional bias: basic and acidic residues. Basic residues predominate over residues lysine 983–alanine 1005. Basic and acidic residues predominate over residues aspartate 1030 to lysine 1045. A phosphoserine mark is found at serine 1139 and serine 1148. The segment covering glutamine 1170–leucine 1180 has biased composition (polar residues). The segment covering serine 1189–threonine 1199 has biased composition (low complexity). Serine 1195 is modified (phosphoserine). Glycyl lysine isopeptide (Lys-Gly) (interchain with G-Cter in SUMO2) cross-links involve residues lysine 1208 and lysine 1249. The tract at residues arginine 1303 to serine 1453 is arg/Ser tandem repeat-rich. The span at serine 1322–arginine 1346 shows a compositional bias: low complexity. Positions histidine 1369–serine 1379 are enriched in basic residues. The segment covering arginine 1380–arginine 1401 has biased composition (low complexity). Over residues arginine 1416–serine 1426 the composition is skewed to basic residues.

The protein localises to the cell membrane. The catalysed reaction is [protein]-peptidylproline (omega=180) = [protein]-peptidylproline (omega=0). Inhibited by cyclosporin A (CsA). PPIase that catalyzes the cis-trans isomerization of proline imidic peptide bonds in oligopeptides and may therefore assist protein folding. Component of a putative tumor-recognition complex involved in the function of NK cells. This is NK-tumor recognition protein from Mus musculus (Mouse).